The sequence spans 143 residues: Large ribosomal subunit protein uL13 (143 aa).

The protein belongs to the universal ribosomal protein uL13 family. Part of the 50S ribosomal subunit.

This protein is one of the early assembly proteins of the 50S ribosomal subunit, although it is not seen to bind rRNA by itself. It is important during the early stages of 50S assembly. The sequence is that of Large ribosomal subunit protein uL13 from Chloroflexus aggregans (strain MD-66 / DSM 9485).